Here is a 92-residue protein sequence, read N- to C-terminus: Small ribosomal subunit protein uS19 (92 aa).

Belongs to the universal ribosomal protein uS19 family.

In terms of biological role, protein S19 forms a complex with S13 that binds strongly to the 16S ribosomal RNA. This is Small ribosomal subunit protein uS19 from Exiguobacterium sibiricum (strain DSM 17290 / CCUG 55495 / CIP 109462 / JCM 13490 / 255-15).